A 599-amino-acid polypeptide reads, in one-letter code: DNA primase (599 aa).

Residues 38 to 62 (CPFHDEKTPSFTVSEDKQICHCFGC) form a CHC2-type zinc finger. A Toprim domain is found at 260–341 (DEIVLLEGFM…NVFVIQLPSG (82 aa)). Residues Glu-266, Asp-310, and Asp-312 each contribute to the Mg(2+) site.

Belongs to the DnaG primase family. In terms of assembly, monomer. Interacts with DnaB. It depends on Zn(2+) as a cofactor. Mg(2+) is required as a cofactor.

It catalyses the reaction ssDNA + n NTP = ssDNA/pppN(pN)n-1 hybrid + (n-1) diphosphate.. Its function is as follows. RNA polymerase that catalyzes the synthesis of short RNA molecules used as primers for DNA polymerase during DNA replication. This chain is DNA primase, found in Staphylococcus aureus (strain MRSA252).